Here is a 213-residue protein sequence, read N- to C-terminus: V-type proton ATPase subunit c'' (213 aa).

The Vacuolar portion of the chain corresponds to 1 to 14 (MNKESKDDDMSLGK). Residues 15-35 (FSFSHFLYYLVLIVVIVYGLY) traverse the membrane as a helical segment. Residues 36-61 (KLFTGHGSDINFGKFLLRTSPYMWAN) are Cytoplasmic-facing. A helical transmembrane segment spans residues 62–82 (LGIALCVGLSVVGAAWGIFIT). At 83–100 (GSSMIGAGVRAPRITTKN) the chain is on the vacuolar side. Residues 101 to 121 (LISIIFCEVVAIYGLIIAIVF) form a helical membrane-spanning segment. The Cytoplasmic portion of the chain corresponds to 122–144 (SSKLTVATAENMYSKSNLYTGYS). Residues 145-165 (LFWAGITVGASNLICGIAVGI) traverse the membrane as a helical segment. Residues 166-183 (TGATAAISDAADSALFVK) lie on the Vacuolar side of the membrane. The helical transmembrane segment at 184–204 (ILVIEIFGSILGLLGLIVGLL) threads the bilayer. At 205–213 (MAGKASEFQ) the chain is on the cytoplasmic side.

It belongs to the V-ATPase proteolipid subunit family. V-ATPase is a heteromultimeric enzyme composed of a peripheral catalytic V1 complex (components A to H) attached to an integral membrane V0 proton pore complex (components: a, c, c', c'', d, e, f and VOA1). The decameric c-ring forms the proton-conducting pore, and is composed of eight proteolipid subunits c, one subunit c' and one subunit c''.

The protein resides in the vacuole membrane. In terms of biological role, proton-conducting pore forming subunit of the V0 complex of vacuolar(H+)-ATPase (V-ATPase), a multisubunit enzyme composed of a peripheral complex (V1) that hydrolyzes ATP and a membrane integral complex (V0) that translocates protons. V-ATPase is responsible for acidifying and maintaining the pH of intracellular compartments. The chain is V-type proton ATPase subunit c'' (VMA16) from Saccharomyces cerevisiae (strain ATCC 204508 / S288c) (Baker's yeast).